Here is a 618-residue protein sequence, read N- to C-terminus: Dihydroxy-acid dehydratase (618 aa).

Mg(2+) is bound at residue aspartate 81. Cysteine 122 is a [2Fe-2S] cluster binding site. 2 residues coordinate Mg(2+): aspartate 123 and lysine 124. Lysine 124 carries the N6-carboxylysine modification. Cysteine 197 lines the [2Fe-2S] cluster pocket. Residue glutamate 493 participates in Mg(2+) binding. Serine 519 functions as the Proton acceptor in the catalytic mechanism.

This sequence belongs to the IlvD/Edd family. In terms of assembly, homodimer. It depends on [2Fe-2S] cluster as a cofactor. Requires Mg(2+) as cofactor.

It catalyses the reaction (2R)-2,3-dihydroxy-3-methylbutanoate = 3-methyl-2-oxobutanoate + H2O. The catalysed reaction is (2R,3R)-2,3-dihydroxy-3-methylpentanoate = (S)-3-methyl-2-oxopentanoate + H2O. Its pathway is amino-acid biosynthesis; L-isoleucine biosynthesis; L-isoleucine from 2-oxobutanoate: step 3/4. The protein operates within amino-acid biosynthesis; L-valine biosynthesis; L-valine from pyruvate: step 3/4. Its function is as follows. Functions in the biosynthesis of branched-chain amino acids. Catalyzes the dehydration of (2R,3R)-2,3-dihydroxy-3-methylpentanoate (2,3-dihydroxy-3-methylvalerate) into 2-oxo-3-methylpentanoate (2-oxo-3-methylvalerate) and of (2R)-2,3-dihydroxy-3-methylbutanoate (2,3-dihydroxyisovalerate) into 2-oxo-3-methylbutanoate (2-oxoisovalerate), the penultimate precursor to L-isoleucine and L-valine, respectively. The polypeptide is Dihydroxy-acid dehydratase (Bordetella avium (strain 197N)).